The sequence spans 130 residues: 3-aminoacrylate deaminase RutC (130 aa).

It belongs to the RutC family.

The catalysed reaction is (Z)-3-aminoacrylate + H2O + H(+) = 3-oxopropanoate + NH4(+). Involved in pyrimidine catabolism. Catalyzes the deamination of 3-aminoacrylate to malonic semialdehyde, a reaction that can also occur spontaneously. RutC may facilitate the reaction and modulate the metabolic fitness, rather than catalyzing essential functions. In Klebsiella variicola (strain At-22), this protein is 3-aminoacrylate deaminase RutC.